We begin with the raw amino-acid sequence, 82 residues long: Small ribosomal subunit protein bS18 (82 aa).

The interval 1-20 is disordered; that stretch reads MSEINQTVTRRPFHRRRKTC.

It belongs to the bacterial ribosomal protein bS18 family. Part of the 30S ribosomal subunit. Forms a tight heterodimer with protein bS6.

In terms of biological role, binds as a heterodimer with protein bS6 to the central domain of the 16S rRNA, where it helps stabilize the platform of the 30S subunit. The sequence is that of Small ribosomal subunit protein bS18 from Bartonella quintana (strain Toulouse) (Rochalimaea quintana).